We begin with the raw amino-acid sequence, 228 residues long: MACKVLVVDLDGTLTLGRNTYELSAEALLALRRARDAGIRVVLATANGLDFALTVARYLGIRDVIAENGCLVHLDGVTYELCSGDMAEVDRLVLSTGVVKPSHQNKCRKYDLAYIPLREDAVERLRDVLGPGYVVESSGYAIHVRPAGVDKGTAVKWLCQRLGVPCFQVASVGDSDVDVGMLSVSWGFAVGNATPAAKKAAKVVVDGPSGIGFKEAVEIILSGGACAP.

Catalysis depends on Asp-9, which acts as the Nucleophile. Positions 9 and 11 each coordinate Mg(2+). Lys-151 lines the substrate pocket. Residues Asp-174 and Asp-178 each contribute to the Mg(2+) site.

Belongs to the archaeal SPP-like hydrolase family. It depends on Mg(2+) as a cofactor.

The catalysed reaction is 2-phosphoglycolate + H2O = glycolate + phosphate. In terms of biological role, catalyzes the dephosphorylation of 2-phosphoglycolate. This is Phosphoglycolate phosphatase from Pyrobaculum aerophilum (strain ATCC 51768 / DSM 7523 / JCM 9630 / CIP 104966 / NBRC 100827 / IM2).